Consider the following 215-residue polypeptide: Large ribosomal subunit protein uL3 (215 aa).

Residues 134–166 (MAHGSKNHRAPGSIGAGTTPGRVFPGKRMPGRM) are disordered.

This sequence belongs to the universal ribosomal protein uL3 family. As to quaternary structure, part of the 50S ribosomal subunit. Forms a cluster with proteins L14 and L19.

One of the primary rRNA binding proteins, it binds directly near the 3'-end of the 23S rRNA, where it nucleates assembly of the 50S subunit. The polypeptide is Large ribosomal subunit protein uL3 (Gloeobacter violaceus (strain ATCC 29082 / PCC 7421)).